A 304-amino-acid polypeptide reads, in one-letter code: Recombination-associated protein RdgC (304 aa).

The protein belongs to the RdgC family.

It localises to the cytoplasm. Its subcellular location is the nucleoid. May be involved in recombination. The chain is Recombination-associated protein RdgC from Paraburkholderia phymatum (strain DSM 17167 / CIP 108236 / LMG 21445 / STM815) (Burkholderia phymatum).